The primary structure comprises 289 residues: Elongation factor Ts (289 aa).

The segment at 80-83 is involved in Mg(2+) ion dislocation from EF-Tu; the sequence is TDFV.

It belongs to the EF-Ts family.

Its subcellular location is the cytoplasm. Its function is as follows. Associates with the EF-Tu.GDP complex and induces the exchange of GDP to GTP. It remains bound to the aminoacyl-tRNA.EF-Tu.GTP complex up to the GTP hydrolysis stage on the ribosome. This Francisella tularensis subsp. tularensis (strain FSC 198) protein is Elongation factor Ts.